Consider the following 302-residue polypeptide: Glycine--tRNA ligase alpha subunit (302 aa).

It belongs to the class-II aminoacyl-tRNA synthetase family. Tetramer of two alpha and two beta subunits.

Its subcellular location is the cytoplasm. The catalysed reaction is tRNA(Gly) + glycine + ATP = glycyl-tRNA(Gly) + AMP + diphosphate. This Haemophilus influenzae (strain 86-028NP) protein is Glycine--tRNA ligase alpha subunit.